Consider the following 87-residue polypeptide: U3-theraphotoxin-Hhn1n (87 aa).

A signal peptide spans M1–A24. Residues S25–R52 constitute a propeptide that is removed on maturation. Disulfide bonds link C54–C67, C61–C72, and C66–C79.

It belongs to the neurotoxin 10 (Hwtx-1) family. 51 (Hntx-8) subfamily. Hntx-8 sub-subfamily. As to expression, expressed by the venom gland.

The protein resides in the secreted. Functionally, weakly inhibits Kv11.1/KCNH2/ERG1, Kv1.2/KCNA2, Kv1.3/KCNA3, and Kv2.1/KCNB1. In Cyriopagopus hainanus (Chinese bird spider), this protein is U3-theraphotoxin-Hhn1n.